Consider the following 503-residue polypeptide: Catalase (503 aa).

Positions 1 to 21 (MHMSKSFLIISMGFVAVSVQA) are cleaved as a signal peptide. Active-site residues include H72 and N145. Y353 provides a ligand contact to heme.

It belongs to the catalase family. Heme is required as a cofactor.

The protein localises to the periplasm. The enzyme catalyses 2 H2O2 = O2 + 2 H2O. Decomposes hydrogen peroxide into water and oxygen; serves to protect cells from the toxic effects of hydrogen peroxide. The polypeptide is Catalase (Vibrio cholerae serotype O1 (strain ATCC 39315 / El Tor Inaba N16961)).